Here is a 475-residue protein sequence, read N- to C-terminus: Ribosomal RNA small subunit methyltransferase F (475 aa).

S-adenosyl-L-methionine is bound by residues A125–K131, E149, D176, and D194. Catalysis depends on C247, which acts as the Nucleophile.

The protein belongs to the class I-like SAM-binding methyltransferase superfamily. RsmB/NOP family.

It is found in the cytoplasm. It catalyses the reaction cytidine(1407) in 16S rRNA + S-adenosyl-L-methionine = 5-methylcytidine(1407) in 16S rRNA + S-adenosyl-L-homocysteine + H(+). In terms of biological role, specifically methylates the cytosine at position 1407 (m5C1407) of 16S rRNA. The protein is Ribosomal RNA small subunit methyltransferase F of Aeromonas hydrophila subsp. hydrophila (strain ATCC 7966 / DSM 30187 / BCRC 13018 / CCUG 14551 / JCM 1027 / KCTC 2358 / NCIMB 9240 / NCTC 8049).